A 926-amino-acid polypeptide reads, in one-letter code: Vacuolar protein sorting-associated protein 39 homolog (926 aa).

Residues 15–306 form the CNH domain; it reads PVEVTCLAFQ…MTLCSGARGQ (292 aa). The stretch at 590 to 768 is one CHCR repeat; the sequence is DETEMARNLN…LFRTLVHPNQ (179 aa).

Belongs to the VAM6/VPS39 family. Probable core component of the homotypic fusion and vacuole protein sorting (HOPS) complex consisting of the core class C Vps proteins vps-11, vps-16, vps-18, and which further associates with vps-33.1, vps-39 and vps-41. May interact with lgg-2. Interacts with cuti-1.

It is found in the cytoplasm. The protein resides in the lysosome membrane. The protein localises to the late endosome membrane. It localises to the late endosome. Its subcellular location is the lysosome. Functionally, plays a role in vesicle-mediated protein trafficking to lysosomal compartments including the endocytic membrane transport and autophagic pathways. Believed to act in part as a component of the putative HOPS endosomal tethering complex which is proposed to be involved in the rab-5-to-rab-7 endosome conversion probably implicating sand-1, and via binding SNAREs and SNARE complexes to mediate tethering and docking events during SNARE-mediated membrane fusion. The HOPS complex is proposed to be recruited to rab-7 on the late endosomal membrane and to regulate late endocytic, phagocytic and autophagic traffic towards lysosomes. Involved in homotypic vesicle fusions between late endosomes and in heterotypic fusions between late endosomes and lysosomes. Required for fusion of endosomes. In association with lgg-2 mediates the tethering of autophagosomes with lysosomes to form autolysosomes. Within the HOPS complex, contributes to the normal development of gut granules in embryonic and adult intestinal cells. This chain is Vacuolar protein sorting-associated protein 39 homolog, found in Caenorhabditis elegans.